Consider the following 250-residue polypeptide: Phosphonates import ATP-binding protein PhnC (250 aa).

Positions 2 to 247 (IVFNNVNKVW…KLDAQAMKKI (246 aa)) constitute an ABC transporter domain. 35–42 (GLSGAGKT) contacts ATP.

It belongs to the ABC transporter superfamily. Phosphonates importer (TC 3.A.1.9.1) family. The complex is composed of two ATP-binding proteins (PhnC), two transmembrane proteins (PhnE) and a solute-binding protein (PhnD).

Its subcellular location is the cell membrane. It carries out the reaction phosphonate(out) + ATP + H2O = phosphonate(in) + ADP + phosphate + H(+). Part of the ABC transporter complex PhnCDE involved in phosphonates import. Responsible for energy coupling to the transport system. The polypeptide is Phosphonates import ATP-binding protein PhnC (Mycoplasma mycoides subsp. mycoides SC (strain CCUG 32753 / NCTC 10114 / PG1)).